The sequence spans 456 residues: Neurexin-3-beta (456 aa).

The N-terminal stretch at 1-35 (MHLRIHARRNPPRRPAWTLGIWSLFWGCIVSSVWS) is a signal peptide. The Extracellular portion of the chain corresponds to 36–381 (SSNVASSSSS…EVIRESSSTT (346 aa)). The disordered stretch occupies residues 41–63 (SSSSSPGSHSQHEHHFHGSKHHS). Positions 52-63 (HEHHFHGSKHHS) are enriched in basic residues. A Laminin G-like domain is found at 82–282 (ATYIFGKSGG…NPNIKINGSV (201 aa)). Ca(2+) is bound by residues Asp134 and Ile151. Asn181 carries an N-linked (GlcNAc...) asparagine glycan. The Ca(2+) site is built by Ile233 and Asn235. Asn279 and Asn323 each carry an N-linked (GlcNAc...) asparagine glycan. The disordered stretch occupies residues 316 to 340 (ATTTTRKNRSTASIQPTSDDLVSSA). The span at 325–340 (STASIQPTSDDLVSSA) shows a compositional bias: polar residues. Ser339 is a glycosylation site (O-linked (Xyl...) (heparan sulfate) serine). The helical transmembrane segment at 382–402 (GMVVGIVAAAALCILILLYAM) threads the bilayer. The Cytoplasmic portion of the chain corresponds to 403–456 (YKYRNRDEGSYQVDETRNYISNSAQSNGTLLKEKPPSSKGGHKKQKNKDKEYYV). Residues 424–456 (NSAQSNGTLLKEKPPSSKGGHKKQKNKDKEYYV) form a disordered region.

Belongs to the neurexin family. In terms of assembly, weakly interacts with CBLN1 and CBLN2. Very weak binding, if any, to CBLN4. Specific isoforms bind neuroligins NLGN1, NLGN2 and NLGN3. Interacts with CLSTN3. Post-translationally, processed by alpha-secretase leading to the formation of an extracellular soluble protein as well as a C-terminal membrane-embedded fragment (CTF). Proteolysis of these CTFs by gamma-secretase releases intracellular domains (ICDs) and extracellular peptides. O-glycosylated; contains heparan sulfate. Heparan sulfate attachment is required for synapse development by mediating interactions with neuroligins.

The protein resides in the presynaptic cell membrane. It localises to the secreted. Neuronal cell surface protein that may be involved in cell recognition and cell adhesion. May mediate intracellular signaling. Functions as part of a trans-synaptic complex by binding to cerebellins and postsynaptic GRID1. This interaction helps regulate the activity of NMDA and AMPA receptors at hippocampal synapses without affecting synapse formation. NRXN3B-CBLN2-GRID1 complex transduce presynaptic signals into postsynaptic AMPAR response. This chain is Neurexin-3-beta (NRXN3), found in Bos taurus (Bovine).